We begin with the raw amino-acid sequence, 380 residues long: Cysteine protease ATG4A (380 aa).

The active-site Nucleophile is Cys60. Catalysis depends on residues Asp262 and His264. The LIR motif lies at 375 to 378; it reads FEIL.

Belongs to the peptidase C54 family.

The protein localises to the cytoplasm. It catalyses the reaction [protein]-C-terminal L-amino acid-glycyl-phosphatidylethanolamide + H2O = [protein]-C-terminal L-amino acid-glycine + a 1,2-diacyl-sn-glycero-3-phosphoethanolamine. Functionally, cysteine protease that plays a key role in autophagy by mediating both proteolytic activation and delipidation of ATG8 family proteins. The protease activity is required for proteolytic activation of ATG8 family proteins: cleaves the C-terminal amino acid of ATG8 proteins to reveal a C-terminal glycine. Exposure of the glycine at the C-terminus is essential for ATG8 proteins conjugation to phosphatidylethanolamine (PE) and insertion to membranes, which is necessary for autophagy. Protease activity is also required to counteract formation of high-molecular weight conjugates of ATG8 proteins (ATG8ylation): acts as a deubiquitinating-like enzyme that removes ATG8 conjugated to other proteins, such as ATG3. In addition to the protease activity, also mediates delipidation of ATG8 family proteins. Catalyzes delipidation of PE-conjugated forms of ATG8 proteins during macroautophagy. The chain is Cysteine protease ATG4A from Gallus gallus (Chicken).